Reading from the N-terminus, the 485-residue chain is Trigger factor (485 aa).

A PPIase FKBP-type domain is found at 169–261 (GDVAIVDFVG…LKELKEKELP (93 aa)).

This sequence belongs to the FKBP-type PPIase family. Tig subfamily.

The protein localises to the cytoplasm. It catalyses the reaction [protein]-peptidylproline (omega=180) = [protein]-peptidylproline (omega=0). Involved in protein export. Acts as a chaperone by maintaining the newly synthesized protein in an open conformation. Functions as a peptidyl-prolyl cis-trans isomerase. This chain is Trigger factor, found in Trichodesmium erythraeum (strain IMS101).